A 392-amino-acid chain; its full sequence is Chaperone protein DnaJ 1 (392 aa).

A J domain is found at 4-67 (DYYEILGVSH…QKRAVFDRGG (64 aa)). The CR-type zinc finger occupies 134-216 (GVTKSLEVDT…CSGEGRVRTT (83 aa)). Residues Cys-147, Cys-150, Cys-164, Cys-167, Cys-190, Cys-193, Cys-204, and Cys-207 each contribute to the Zn(2+) site. 4 CXXCXGXG motif repeats span residues 147 to 154 (CPKCQGKG), 164 to 171 (CDTCQGRG), 190 to 197 (CPTCHGYG), and 204 to 211 (CQECSGEG). Residues 367-392 (ETNASASVEKSGGRGMFSRIKEAFGG) are disordered.

Belongs to the DnaJ family. As to quaternary structure, homodimer. Zn(2+) serves as cofactor.

It localises to the cytoplasm. Functionally, participates actively in the response to hyperosmotic and heat shock by preventing the aggregation of stress-denatured proteins and by disaggregating proteins, also in an autonomous, DnaK-independent fashion. Unfolded proteins bind initially to DnaJ; upon interaction with the DnaJ-bound protein, DnaK hydrolyzes its bound ATP, resulting in the formation of a stable complex. GrpE releases ADP from DnaK; ATP binding to DnaK triggers the release of the substrate protein, thus completing the reaction cycle. Several rounds of ATP-dependent interactions between DnaJ, DnaK and GrpE are required for fully efficient folding. Also involved, together with DnaK and GrpE, in the DNA replication of plasmids through activation of initiation proteins. In Cutibacterium acnes (strain DSM 16379 / KPA171202) (Propionibacterium acnes), this protein is Chaperone protein DnaJ 1.